The sequence spans 338 residues: Inorganic pyrophosphatase (338 aa).

Diphosphate is bound at residue R129. The Mg(2+) site is built by D166, D171, and D203.

Belongs to the PPase family. As to quaternary structure, component of the NURF complex composed of Caf1-55, E(bx), Nurf-38 and Iswi. The cofactor is Mg(2+).

It is found in the cytoplasm. Its subcellular location is the nucleus. It catalyses the reaction diphosphate + H2O = 2 phosphate + H(+). Its function is as follows. Component of NURF (nucleosome remodeling factor), a complex which catalyzes ATP-dependent nucleosome sliding and facilitates transcription of chromatin. NURF is required for homeotic gene expression, proper larval blood cell development, normal male X chromosome morphology, ecdysteroid signaling and metamorphosis. Inorganic pyrophosphatase (PPase), hydrolyzes inorganic pyrophosphate to inorganic phosphate, essential for driving critical biosynthetic reactions including transcription, replication, and DNA repair. This chain is Inorganic pyrophosphatase (Nurf-38), found in Drosophila melanogaster (Fruit fly).